The primary structure comprises 227 residues: Small ribosomal subunit protein uS3 (227 aa).

A KH type-2 domain is found at 39–107 (VREFLDKRLV…PVHINIEEVR (69 aa)).

The protein belongs to the universal ribosomal protein uS3 family. As to quaternary structure, part of the 30S ribosomal subunit. Forms a tight complex with proteins S10 and S14.

Its function is as follows. Binds the lower part of the 30S subunit head. Binds mRNA in the 70S ribosome, positioning it for translation. The polypeptide is Small ribosomal subunit protein uS3 (Marinobacter nauticus (strain ATCC 700491 / DSM 11845 / VT8) (Marinobacter aquaeolei)).